Reading from the N-terminus, the 396-residue chain is MAKAKFERTKPHVNIGTIGHVDHGKTTLTAAITKVLHDKFPNLNESRAFDQIDNAPEERQRGITINISHVEYQTEKRHYAHVDAPGHADYIKNMITGAAQMDGAILVVAATDGPMPQTREHVLLARQVGVPYILVALNKSDAVDDEELLELVEMEVRELLAAQEFDEDAPVVRVSALKALEGDAKWVESVTQLMDAVDESIPAPVRETDKPFLMPVEDVFTITGRGTVVTGRVERGVVNVNEEVEIVGIRQTTTKTTVTGVEMFRKLLDQGQAGDNVGLLLRGIKREDVERGQVVIKPGTTTPHTEFEGQVYILSKDEGGRHTPFFNNYRPQFYFRTTDVTGVVTLPEGTEMVMPGDNTNISVTLIQPVAMDEGLRFAIREGGRTVGAGRVVKIIK.

Residues K10 to V205 enclose the tr-type G domain. A G1 region spans residues G19 to T26. Residue G19 to T26 participates in GTP binding. T26 serves as a coordination point for Mg(2+). The interval G62–N66 is G2. The tract at residues D83 to G86 is G3. GTP is bound by residues D83 to H87 and N138 to D141. The tract at residues N138 to D141 is G4. The G5 stretch occupies residues S175–L177.

It belongs to the TRAFAC class translation factor GTPase superfamily. Classic translation factor GTPase family. EF-Tu/EF-1A subfamily. In terms of assembly, monomer.

Its subcellular location is the cytoplasm. The enzyme catalyses GTP + H2O = GDP + phosphate + H(+). Functionally, GTP hydrolase that promotes the GTP-dependent binding of aminoacyl-tRNA to the A-site of ribosomes during protein biosynthesis. This chain is Elongation factor Tu, found in Mycobacterium leprae (strain Br4923).